The sequence spans 223 residues: MIF4G domain-containing protein B (223 aa).

The MIF4G domain maps to 9–206; it reads DYKIQGFDAD…LEMIEYRAAG (198 aa).

It belongs to the MIF4GD family. Interacts with eif4g1, eif4g2 and slbp; probably tethered by SLBP to the 3'-end of mRNAs ending with the histone stem-loop, it also interacts with eif4g1 which is bound to their 5'-end.

Its subcellular location is the cytoplasm. It is found in the nucleus. Its function is as follows. Functions in replication-dependent translation of histone mRNAs which differ from other eukaryotic mRNAs in that they do not end with a poly-A tail but a stem-loop. May participate in circularizing those mRNAs specifically enhancing their translation. This Xenopus laevis (African clawed frog) protein is MIF4G domain-containing protein B (mif4gd-b).